The chain runs to 171 residues: AN1-type zinc finger protein 2A (171 aa).

2 consecutive AN1-type zinc fingers follow at residues 4-52 and 94-142; these read PDLG…KKDV and KVFT…SSAS. Zn(2+) is bound by residues Cys10, Cys15, Cys25, Cys28, Cys33, His36, His42, Cys44, Cys100, Cys105, Cys115, Cys118, Cys123, His126, His132, and Cys134. Positions 134 to 171 are disordered; the sequence is CQAGSSSASRGRTSTSRAAEQKPSGVSWLAQRLRRTVK. A compositionally biased stretch (low complexity) spans 136-151; sequence AGSSSASRGRTSTSRA.

The protein localises to the cytoplasm. It is found in the nucleus. The polypeptide is AN1-type zinc finger protein 2A (Zfand2a) (Mus musculus (Mouse)).